A 159-amino-acid polypeptide reads, in one-letter code: Putative polyketide cyclase (159 aa).

It to polyketide cyclases.

Involved in developmentally regulated synthesis of a compound biosynthetically related to polyketide antibiotics which is essential for spore color in Streptomyces coelicolor. This chain is Putative polyketide cyclase, found in Streptomyces coelicolor (strain ATCC BAA-471 / A3(2) / M145).